Consider the following 112-residue polypeptide: CLAVATA3/ESR (CLE)-related protein 44 (112 aa).

Residues 1–39 (MATTIDQTSIKSLHFHQVIRLIITIIFLAFLFLIGPTSS) form the signal peptide. The tract at residues 41–112 (NHHLHESSSK…VPSGPNPISN (72 aa)) is disordered. Over residues 62–71 (QPSTPSSSTM) the composition is skewed to polar residues. A hydroxyproline mark is found at Pro-104 and Pro-107. A glycan (O-linked (Ara...) hydroxyproline) is linked at Pro-107.

Belongs to the CLV3/ESR signal peptide family. Interacts specifically with the leucine-rich repeat receptor-like protein kinase TDR, especially in the presence of SERK2. Post-translationally, the O-glycosylation (arabinosylation) of the hydroxyproline Pro-107 enhances binding affinity of the CLE44p peptide for its receptor. In terms of tissue distribution, mostly expressed in flowers and leaves. Widely expressed along the vascular strands. In roots and hypocotyls, present in endodermal cells as well as cells in the phloem and the adjacent pericycle.

It is found in the secreted. It localises to the extracellular space. Functionally, extracellular signal peptide that regulates cell fate. May act with TDR as a ligand-receptor pair in a signal transduction pathway that represses tracheary element differentiation but promotes the formation of procambial cells adjacent to phloem cells in the veins. Regulates the transition of protophloem cells from proliferation to differentiation, thus impinging on postembryonic growth capacity of the root meristem; this signaling pathway requires CRN and CLV2. The polypeptide is CLAVATA3/ESR (CLE)-related protein 44 (Arabidopsis thaliana (Mouse-ear cress)).